The following is a 231-amino-acid chain: Small ribosomal subunit protein uS5 (231 aa).

The segment at 1–63 is disordered; sequence MADLENKTVK…KSVDRANKVK (63 aa). Residues 29-60 show a composition bias toward basic and acidic residues; the sequence is KRTESGAKKQIWEKRSAHDSKDMPKKSVDRAN. One can recognise an S5 DRBM domain in the interval 75 to 138; that stretch reads FSEKVVNISR…KDARNHLISV (64 aa).

This sequence belongs to the universal ribosomal protein uS5 family. Part of the 30S ribosomal subunit. Contacts proteins S4 and S8.

In terms of biological role, with S4 and S12 plays an important role in translational accuracy. Functionally, located at the back of the 30S subunit body where it stabilizes the conformation of the head with respect to the body. The sequence is that of Small ribosomal subunit protein uS5 from Mycoplasmopsis agalactiae (strain NCTC 10123 / CIP 59.7 / PG2) (Mycoplasma agalactiae).